The primary structure comprises 1305 residues: Junctional cadherin 5-associated protein (1305 aa).

7 disordered regions span residues 13–86 (YKLS…PSTA), 120–151 (REQE…VGGR), 249–419 (GVPK…HTTA), 450–545 (KLDG…CEMQ), 575–604 (IPVK…EQSV), 616–795 (ALTG…SRQL), and 818–1005 (FNKE…GLSA). Composition is skewed to basic and acidic residues over residues 21–31 (APHEDDGERRQ), 69–82 (PESR…HGER), 120–129 (REQEAREDPG), and 140–151 (HPREGPWEVGGR). The segment covering 337–358 (GLEPPVYVPPPSYKSPPQPAAH) has biased composition (pro residues). A compositionally biased stretch (basic and acidic residues) spans 360-369 (CPEEAVSRHE). Composition is skewed to polar residues over residues 530–545 (LVSS…CEMQ) and 579–594 (SESQ…NDLK). Positions 595–604 (QSASLQEQSV) are enriched in low complexity. Residues 669-683 (QQTQTSFAHEPQSLQ) show a composition bias toward polar residues. Low complexity predominate over residues 729 to 748 (SPKSQGSLSPSSNSAFSGSS). Ser-841 carries the phosphoserine modification. Basic and acidic residues-rich tracts occupy residues 878-889 (SKSESWSEEGRP) and 945-958 (AKPE…EQRE). Residues Ser-1004, Ser-1010, Ser-1152, and Ser-1239 each carry the phosphoserine modification. Disordered regions lie at residues 1062–1166 (GAQR…DVET) and 1234–1305 (SRAA…VERV). The segment covering 1276-1288 (ADGHPAARRENGG) has biased composition (basic and acidic residues).

It is found in the cell junction. Its subcellular location is the adherens junction. The chain is Junctional cadherin 5-associated protein (JCAD) from Bos taurus (Bovine).